We begin with the raw amino-acid sequence, 256 residues long: Large ribosomal subunit protein bL28m (256 aa).

The N-terminal 55 residues, 1 to 55, are a transit peptide targeting the mitochondrion; sequence MPLHKYPVWLWKRLQLREGICSRLPGHYLRSLEEERTPTPVHYRPHGAKFKINPK.

This sequence belongs to the bacterial ribosomal protein bL28 family. In terms of assembly, component of the mitochondrial large ribosomal subunit (mt-LSU). Mature mammalian 55S mitochondrial ribosomes consist of a small (28S) and a large (39S) subunit. The 28S small subunit contains a 12S ribosomal RNA (12S mt-rRNA) and 30 different proteins. The 39S large subunit contains a 16S rRNA (16S mt-rRNA), a copy of mitochondrial valine transfer RNA (mt-tRNA(Val)), which plays an integral structural role, and 52 different proteins. Interacts with OXA1L. Found in a variety of normal tissues including spleen, testes, thymus, liver, kidney, brain, adrenal, lung and retinal tissue.

The protein localises to the mitochondrion. In Homo sapiens (Human), this protein is Large ribosomal subunit protein bL28m (MRPL28).